The chain runs to 114 residues: Macrophage migration inhibitory factor homolog (114 aa).

Residue P2 is the Proton acceptor; via imino nitrogen of the active site. Residues K33 and I65 each coordinate substrate.

The protein belongs to the MIF family.

The protein localises to the secreted. The catalysed reaction is L-dopachrome = 5,6-dihydroxyindole-2-carboxylate. It carries out the reaction 3-phenylpyruvate = enol-phenylpyruvate. In terms of biological role, tautomerization of the methyl ester of L-dopachrome. Inhibits migration of human peripheral blood mononuclear cells. The chain is Macrophage migration inhibitory factor homolog from Trichinella spiralis (Trichina worm).